The chain runs to 445 residues: Glutamyl-tRNA(Gln) amidotransferase subunit D (445 aa).

The Asparaginase/glutaminase domain occupies 93–425; sequence SEIKIISTGG…EKIRSLMISN (333 aa). Active-site residues include threonine 103, threonine 179, aspartate 180, and lysine 258.

The protein belongs to the asparaginase 1 family. GatD subfamily. As to quaternary structure, heterodimer of GatD and GatE.

The catalysed reaction is L-glutamyl-tRNA(Gln) + L-glutamine + ATP + H2O = L-glutaminyl-tRNA(Gln) + L-glutamate + ADP + phosphate + H(+). Functionally, allows the formation of correctly charged Gln-tRNA(Gln) through the transamidation of misacylated Glu-tRNA(Gln) in organisms which lack glutaminyl-tRNA synthetase. The reaction takes place in the presence of glutamine and ATP through an activated gamma-phospho-Glu-tRNA(Gln). The GatDE system is specific for glutamate and does not act on aspartate. The protein is Glutamyl-tRNA(Gln) amidotransferase subunit D of Saccharolobus islandicus (strain L.S.2.15 / Lassen #1) (Sulfolobus islandicus).